A 225-amino-acid chain; its full sequence is ATP-dependent dethiobiotin synthetase BioD (225 aa).

Residue 12 to 17 (EVGKTY) participates in ATP binding. Residue T16 participates in Mg(2+) binding. K37 is an active-site residue. S41 is a binding site for substrate. ATP is bound by residues D52, 114-117 (EGAG), and 174-175 (NC). Mg(2+) contacts are provided by D52 and E114.

Belongs to the dethiobiotin synthetase family. As to quaternary structure, homodimer. It depends on Mg(2+) as a cofactor.

Its subcellular location is the cytoplasm. It carries out the reaction (7R,8S)-7,8-diammoniononanoate + CO2 + ATP = (4R,5S)-dethiobiotin + ADP + phosphate + 3 H(+). Its pathway is cofactor biosynthesis; biotin biosynthesis; biotin from 7,8-diaminononanoate: step 1/2. Its function is as follows. Catalyzes a mechanistically unusual reaction, the ATP-dependent insertion of CO2 between the N7 and N8 nitrogen atoms of 7,8-diaminopelargonic acid (DAPA, also called 7,8-diammoniononanoate) to form a ureido ring. This Francisella tularensis subsp. mediasiatica (strain FSC147) protein is ATP-dependent dethiobiotin synthetase BioD.